Reading from the N-terminus, the 460-residue chain is Putative protein p41 (460 aa).

A Helicase ATP-binding domain is found at 14 to 186; that stretch reads INHLLDIKRS…WGQAWFVDQG (173 aa).

In Escherichia coli (Bacteriophage APSE-1), this protein is Putative protein p41 (41).